The primary structure comprises 99 residues: UPF0235 protein HS_1657 (99 aa).

The protein belongs to the UPF0235 family.

This is UPF0235 protein HS_1657 from Histophilus somni (strain 129Pt) (Haemophilus somnus).